Reading from the N-terminus, the 289-residue chain is 4-hydroxy-tetrahydrodipicolinate synthase (289 aa).

Thr-44 lines the pyruvate pocket. Tyr-130 functions as the Proton donor/acceptor in the catalytic mechanism. The active-site Schiff-base intermediate with substrate is Lys-158. Ile-200 lines the pyruvate pocket.

It belongs to the DapA family. Homotetramer; dimer of dimers.

The protein localises to the cytoplasm. The catalysed reaction is L-aspartate 4-semialdehyde + pyruvate = (2S,4S)-4-hydroxy-2,3,4,5-tetrahydrodipicolinate + H2O + H(+). It functions in the pathway amino-acid biosynthesis; L-lysine biosynthesis via DAP pathway; (S)-tetrahydrodipicolinate from L-aspartate: step 3/4. Functionally, catalyzes the condensation of (S)-aspartate-beta-semialdehyde [(S)-ASA] and pyruvate to 4-hydroxy-tetrahydrodipicolinate (HTPA). In Archaeoglobus fulgidus (strain ATCC 49558 / DSM 4304 / JCM 9628 / NBRC 100126 / VC-16), this protein is 4-hydroxy-tetrahydrodipicolinate synthase.